Consider the following 1093-residue polypeptide: Atos homolog protein A (1093 aa).

The segment at 29–37 (ALLITEGRT) is transactivation domain 1 (TAD1). Disordered regions lie at residues 396–479 (AGRP…GNPL), 558–579 (SSKSKLKTPDTPISPRLDGESK), and 746–788 (HDNF…GSMR). The segment covering 746 to 763 (HDNFKNKNRQDKTKAAHD) has biased composition (basic and acidic residues). The required for macropage invasion stretch occupies residues 895–952 (LLGNFEESVLNFRLDPLGIVEGFTAEVGASGVFCPTHMTLPVEVSFYSVSDDNAPSPY). Positions 979–987 (FNPNKTVVK) are transactivation domain 2 (TAD2).

It belongs to the ATOS family.

The protein resides in the nucleus. In terms of biological role, transcription regulator that syncronizes transcriptional and translational programs to promote macrophage invasion of tissues. The sequence is that of Atos homolog protein A (ATOSA) from Gallus gallus (Chicken).